We begin with the raw amino-acid sequence, 154 residues long: Deoxyuridine 5'-triphosphate nucleotidohydrolase (154 aa).

Residues 64–66 (RSG), Asn77, 81–83 (TID), and Lys91 each bind substrate.

It belongs to the dUTPase family. In terms of assembly, homotrimer. Mg(2+) is required as a cofactor.

The catalysed reaction is dUTP + H2O = dUMP + diphosphate + H(+). It participates in pyrimidine metabolism; dUMP biosynthesis; dUMP from dCTP (dUTP route): step 2/2. Its function is as follows. This enzyme is involved in nucleotide metabolism: it produces dUMP, the immediate precursor of thymidine nucleotides and it decreases the intracellular concentration of dUTP so that uracil cannot be incorporated into DNA. This Mycobacterium sp. (strain JLS) protein is Deoxyuridine 5'-triphosphate nucleotidohydrolase.